Consider the following 638-residue polypeptide: 1-deoxy-D-xylulose-5-phosphate synthase (638 aa).

Thiamine diphosphate contacts are provided by residues His-76 and 117–119; that span reads AHS. Residue Asp-148 participates in Mg(2+) binding. Thiamine diphosphate-binding positions include 149 to 150, Asn-177, Tyr-287, and Glu-369; that span reads GS. Asn-177 is a binding site for Mg(2+).

The protein belongs to the transketolase family. DXPS subfamily. As to quaternary structure, homodimer. Mg(2+) is required as a cofactor. Requires thiamine diphosphate as cofactor.

It carries out the reaction D-glyceraldehyde 3-phosphate + pyruvate + H(+) = 1-deoxy-D-xylulose 5-phosphate + CO2. The protein operates within metabolic intermediate biosynthesis; 1-deoxy-D-xylulose 5-phosphate biosynthesis; 1-deoxy-D-xylulose 5-phosphate from D-glyceraldehyde 3-phosphate and pyruvate: step 1/1. Catalyzes the acyloin condensation reaction between C atoms 2 and 3 of pyruvate and glyceraldehyde 3-phosphate to yield 1-deoxy-D-xylulose-5-phosphate (DXP). The protein is 1-deoxy-D-xylulose-5-phosphate synthase of Rhodopseudomonas palustris (strain BisB5).